Here is a 282-residue protein sequence, read N- to C-terminus: Formamidopyrimidine-DNA glycosylase (282 aa).

The Schiff-base intermediate with DNA role is filled by P2. The Proton donor role is filled by E3. K60 functions as the Proton donor; for beta-elimination activity in the catalytic mechanism. 3 residues coordinate DNA: H99, R118, and K163. The segment at 248–282 adopts an FPG-type zinc-finger fold; that stretch reads LVYRRSGKNCKKCGEKILREKICGRSTHWCPNCQK. R272 acts as the Proton donor; for delta-elimination activity in catalysis.

Belongs to the FPG family. In terms of assembly, monomer. Zn(2+) is required as a cofactor.

It carries out the reaction Hydrolysis of DNA containing ring-opened 7-methylguanine residues, releasing 2,6-diamino-4-hydroxy-5-(N-methyl)formamidopyrimidine.. It catalyses the reaction 2'-deoxyribonucleotide-(2'-deoxyribose 5'-phosphate)-2'-deoxyribonucleotide-DNA = a 3'-end 2'-deoxyribonucleotide-(2,3-dehydro-2,3-deoxyribose 5'-phosphate)-DNA + a 5'-end 5'-phospho-2'-deoxyribonucleoside-DNA + H(+). Functionally, involved in base excision repair of DNA damaged by oxidation or by mutagenic agents. Acts as a DNA glycosylase that recognizes and removes damaged bases. Has a preference for oxidized purines, such as 7,8-dihydro-8-oxoguanine (8-oxoG). Has AP (apurinic/apyrimidinic) lyase activity and introduces nicks in the DNA strand. Cleaves the DNA backbone by beta-delta elimination to generate a single-strand break at the site of the removed base with both 3'- and 5'-phosphates. The protein is Formamidopyrimidine-DNA glycosylase of Prochlorococcus marinus (strain NATL1A).